We begin with the raw amino-acid sequence, 348 residues long: UDP-3-O-acylglucosamine N-acyltransferase (348 aa).

His-241 functions as the Proton acceptor in the catalytic mechanism.

Belongs to the transferase hexapeptide repeat family. LpxD subfamily. In terms of assembly, homotrimer.

The enzyme catalyses a UDP-3-O-[(3R)-3-hydroxyacyl]-alpha-D-glucosamine + a (3R)-hydroxyacyl-[ACP] = a UDP-2-N,3-O-bis[(3R)-3-hydroxyacyl]-alpha-D-glucosamine + holo-[ACP] + H(+). It participates in bacterial outer membrane biogenesis; LPS lipid A biosynthesis. Its function is as follows. Catalyzes the N-acylation of UDP-3-O-acylglucosamine using 3-hydroxyacyl-ACP as the acyl donor. Is involved in the biosynthesis of lipid A, a phosphorylated glycolipid that anchors the lipopolysaccharide to the outer membrane of the cell. The protein is UDP-3-O-acylglucosamine N-acyltransferase of Neisseria meningitidis serogroup B (strain ATCC BAA-335 / MC58).